The chain runs to 487 residues: Uronate isomerase (487 aa).

The protein belongs to the metallo-dependent hydrolases superfamily. Uronate isomerase family.

The enzyme catalyses D-glucuronate = D-fructuronate. The catalysed reaction is aldehydo-D-galacturonate = keto-D-tagaturonate. It participates in carbohydrate metabolism; pentose and glucuronate interconversion. This chain is Uronate isomerase, found in Caulobacter vibrioides (strain ATCC 19089 / CIP 103742 / CB 15) (Caulobacter crescentus).